Reading from the N-terminus, the 401-residue chain is Exodeoxyribonuclease 7 large subunit (401 aa).

The protein belongs to the XseA family. Heterooligomer composed of large and small subunits.

Its subcellular location is the cytoplasm. The catalysed reaction is Exonucleolytic cleavage in either 5'- to 3'- or 3'- to 5'-direction to yield nucleoside 5'-phosphates.. In terms of biological role, bidirectionally degrades single-stranded DNA into large acid-insoluble oligonucleotides, which are then degraded further into small acid-soluble oligonucleotides. This chain is Exodeoxyribonuclease 7 large subunit, found in Clostridium botulinum (strain Hall / ATCC 3502 / NCTC 13319 / Type A).